Here is a 341-residue protein sequence, read N- to C-terminus: HTH-type transcriptional repressor PurR (341 aa).

The region spanning 2-56 (ATIKDVAKRAGVSTTTVSHVINKTRFVAEETKAAVGAAIKELHYSPSAVARSLKV) is the HTH lacI-type domain. The H-T-H motif DNA-binding region spans 4 to 23 (IKDVAKRAGVSTTTVSHVIN). Residues 48–56 (SAVARSLKV) mediate DNA binding. The hypoxanthine site is built by Tyr-73, Arg-190, Thr-192, Phe-221, and Asp-275.

Homodimer.

The protein operates within purine metabolism; purine nucleotide biosynthesis [regulation]. In terms of biological role, is the main repressor of the genes involved in the de novo synthesis of purine nucleotides, regulating purB, purC, purEK, purF, purHD, purL, purMN and guaBA expression. PurR is allosterically activated to bind its cognate DNA by binding the purine corepressors, hypoxanthine or guanine, thereby effecting transcription repression. The chain is HTH-type transcriptional repressor PurR from Serratia proteamaculans (strain 568).